The following is a 318-amino-acid chain: Formimidoylglutamase (318 aa).

Mn(2+)-binding residues include His-130, Asp-155, His-157, Asp-159, Asp-246, and Asp-248.

It belongs to the arginase family. It depends on Mn(2+) as a cofactor.

The enzyme catalyses N-formimidoyl-L-glutamate + H2O = formamide + L-glutamate. Its pathway is amino-acid degradation; L-histidine degradation into L-glutamate; L-glutamate from N-formimidoyl-L-glutamate (hydrolase route): step 1/1. In terms of biological role, catalyzes the conversion of N-formimidoyl-L-glutamate to L-glutamate and formamide. This chain is Formimidoylglutamase, found in Klebsiella pneumoniae (strain 342).